Reading from the N-terminus, the 228-residue chain is Probable septum site-determining protein MinC (228 aa).

Belongs to the MinC family. As to quaternary structure, interacts with MinD and FtsZ.

Functionally, cell division inhibitor that blocks the formation of polar Z ring septums. Rapidly oscillates between the poles of the cell to destabilize FtsZ filaments that have formed before they mature into polar Z rings. Prevents FtsZ polymerization. This chain is Probable septum site-determining protein MinC, found in Pectobacterium atrosepticum (strain SCRI 1043 / ATCC BAA-672) (Erwinia carotovora subsp. atroseptica).